A 659-amino-acid chain; its full sequence is QWRF motif-containing protein 2 (659 aa).

5 disordered regions span residues 1–125, 157–221, 291–317, 340–359, and 371–429; these read MVAA…SVTV, SKKK…LDCG, DTDS…ISKS, RLQD…TSSI, and SDAV…NAYN. The span at 42–72 shows a compositional bias: low complexity; the sequence is SPSPSHSVSSTTTTTTTTTTTTSSSSSSSSS. Residues 90–102 are compositionally biased toward polar residues; sequence RSTTNSASNSIKT. The segment covering 172–190 has biased composition (basic and acidic residues); sequence STPERRRSTPVRDQRENSK. Polar residues-rich tracts occupy residues 206–216 and 291–303; these read SESVVPNSLSR and DTDS…TNGV. 2 stretches are compositionally biased toward low complexity: residues 345 to 359 and 401 to 418; these read GSPL…TSSI and ATTT…SRAR. The QWRF motif motif lies at 468-471; sequence QWRF.

This sequence belongs to the QWRF family.

This Arabidopsis thaliana (Mouse-ear cress) protein is QWRF motif-containing protein 2 (QWRF2).